The primary structure comprises 70 residues: DNA-directed RNA polymerase subunit omega (70 aa).

Belongs to the RNA polymerase subunit omega family. As to quaternary structure, the RNAP catalytic core consists of 2 alpha, 1 beta, 1 beta' and 1 omega subunit. When a sigma factor is associated with the core the holoenzyme is formed, which can initiate transcription.

It carries out the reaction RNA(n) + a ribonucleoside 5'-triphosphate = RNA(n+1) + diphosphate. Functionally, promotes RNA polymerase assembly. Latches the N- and C-terminal regions of the beta' subunit thereby facilitating its interaction with the beta and alpha subunits. The protein is DNA-directed RNA polymerase subunit omega of Bacillus anthracis.